The primary structure comprises 807 residues: AP-5 complex subunit zeta-1 (807 aa).

As to quaternary structure, probably part of the adaptor protein complex 5 (AP-5) a tetramer composed of AP5B1, AP5M1, AP5S1 and AP5Z1. Interacts with ZFYVE26 and SPG11.

The protein resides in the cytoplasm. It is found in the nucleus. As part of AP-5, a probable fifth adaptor protein complex it may be involved in endosomal transport. This is AP-5 complex subunit zeta-1 (Ap5z1) from Mus musculus (Mouse).